We begin with the raw amino-acid sequence, 175 residues long: Acireductone dioxygenase (175 aa).

Residues His81, His83, Glu87, and His126 each coordinate Fe(2+). Positions 81, 83, 87, and 126 each coordinate Ni(2+).

It belongs to the acireductone dioxygenase (ARD) family. Requires Fe(2+) as cofactor. Ni(2+) is required as a cofactor.

Its subcellular location is the cytoplasm. It localises to the nucleus. It carries out the reaction 1,2-dihydroxy-5-(methylsulfanyl)pent-1-en-3-one + O2 = 4-methylsulfanyl-2-oxobutanoate + formate + 2 H(+). The enzyme catalyses 1,2-dihydroxy-5-(methylsulfanyl)pent-1-en-3-one + O2 = 3-(methylsulfanyl)propanoate + CO + formate + 2 H(+). It participates in amino-acid biosynthesis; L-methionine biosynthesis via salvage pathway; L-methionine from S-methyl-5-thio-alpha-D-ribose 1-phosphate: step 5/6. Functionally, catalyzes 2 different reactions between oxygen and the acireductone 1,2-dihydroxy-3-keto-5-methylthiopentene (DHK-MTPene) depending upon the metal bound in the active site. Fe-containing acireductone dioxygenase (Fe-ARD) produces formate and 2-keto-4-methylthiobutyrate (KMTB), the alpha-ketoacid precursor of methionine in the methionine recycle pathway. Ni-containing acireductone dioxygenase (Ni-ARD) produces methylthiopropionate, carbon monoxide and formate, and does not lie on the methionine recycle pathway. This Phaeosphaeria nodorum (strain SN15 / ATCC MYA-4574 / FGSC 10173) (Glume blotch fungus) protein is Acireductone dioxygenase.